The sequence spans 122 residues: Large ribosomal subunit protein uL14 (122 aa).

The protein belongs to the universal ribosomal protein uL14 family. In terms of assembly, part of the 50S ribosomal subunit. Forms a cluster with proteins L3 and L19. In the 70S ribosome, L14 and L19 interact and together make contacts with the 16S rRNA in bridges B5 and B8.

In terms of biological role, binds to 23S rRNA. Forms part of two intersubunit bridges in the 70S ribosome. This is Large ribosomal subunit protein uL14 from Heliobacterium modesticaldum (strain ATCC 51547 / Ice1).